Here is a 195-residue protein sequence, read N- to C-terminus: Imidazoleglycerol-phosphate dehydratase (195 aa).

Belongs to the imidazoleglycerol-phosphate dehydratase family.

The protein localises to the cytoplasm. It catalyses the reaction D-erythro-1-(imidazol-4-yl)glycerol 3-phosphate = 3-(imidazol-4-yl)-2-oxopropyl phosphate + H2O. The protein operates within amino-acid biosynthesis; L-histidine biosynthesis; L-histidine from 5-phospho-alpha-D-ribose 1-diphosphate: step 6/9. In Paraburkholderia phymatum (strain DSM 17167 / CIP 108236 / LMG 21445 / STM815) (Burkholderia phymatum), this protein is Imidazoleglycerol-phosphate dehydratase.